The primary structure comprises 356 residues: 1-deoxy-D-xylulose 5-phosphate reductoisomerase (356 aa).

The NADPH site is built by threonine 7, glycine 8, serine 9, isoleucine 10, glycine 31, asparagine 33, and asparagine 111. Residue lysine 112 participates in 1-deoxy-D-xylulose 5-phosphate binding. Residue glutamate 113 participates in NADPH binding. Aspartate 131 is a binding site for Mn(2+). Serine 132, glutamate 133, serine 155, and histidine 178 together coordinate 1-deoxy-D-xylulose 5-phosphate. Position 133 (glutamate 133) interacts with Mn(2+). Glycine 184 contacts NADPH. Residues serine 191, asparagine 196, lysine 197, and glutamate 200 each coordinate 1-deoxy-D-xylulose 5-phosphate. Residue glutamate 200 coordinates Mn(2+).

This sequence belongs to the DXR family. Mg(2+) serves as cofactor. It depends on Mn(2+) as a cofactor.

The enzyme catalyses 2-C-methyl-D-erythritol 4-phosphate + NADP(+) = 1-deoxy-D-xylulose 5-phosphate + NADPH + H(+). It functions in the pathway isoprenoid biosynthesis; isopentenyl diphosphate biosynthesis via DXP pathway; isopentenyl diphosphate from 1-deoxy-D-xylulose 5-phosphate: step 1/6. In terms of biological role, catalyzes the NADPH-dependent rearrangement and reduction of 1-deoxy-D-xylulose-5-phosphate (DXP) to 2-C-methyl-D-erythritol 4-phosphate (MEP). The chain is 1-deoxy-D-xylulose 5-phosphate reductoisomerase from Campylobacter jejuni subsp. jejuni serotype O:23/36 (strain 81-176).